The following is a 397-amino-acid chain: Argininosuccinate synthase (397 aa).

Residue 8-16 (AYSGGLDTS) participates in ATP binding. Tyr-87 is an L-citrulline binding site. An ATP-binding site is contributed by Gly-117. L-aspartate contacts are provided by Thr-119, Asn-123, and Asp-124. Asn-123 is an L-citrulline binding site. L-citrulline contacts are provided by Arg-127, Ser-175, Glu-259, and Tyr-271.

The protein belongs to the argininosuccinate synthase family. Type 1 subfamily. As to quaternary structure, homotetramer.

Its subcellular location is the cytoplasm. The enzyme catalyses L-citrulline + L-aspartate + ATP = 2-(N(omega)-L-arginino)succinate + AMP + diphosphate + H(+). It participates in amino-acid biosynthesis; L-arginine biosynthesis; L-arginine from L-ornithine and carbamoyl phosphate: step 2/3. This Streptomyces clavuligerus protein is Argininosuccinate synthase.